We begin with the raw amino-acid sequence, 37 residues long: Large ribosomal subunit protein bL36 (37 aa).

This sequence belongs to the bacterial ribosomal protein bL36 family.

In Mycobacterium leprae (strain Br4923), this protein is Large ribosomal subunit protein bL36.